The primary structure comprises 135 residues: MGGQSKVFTLAEVSNHNNAKDCWLIISGKVYNVTKFLEDHPGGGEVLLSATGKDATDDFEDIGHSSSARAMLDEYYVGDIDSSTIPTKVKYTPPKQPHYNQDKTTEFIVKLLQFLVPLIILGVAFGVHFYTKQSA.

Residues 5–81 (SKVFTLAEVS…LDEYYVGDID (77 aa)) form the Cytochrome b5 heme-binding domain. 2 residues coordinate heme: His40 and His64. The helical transmembrane segment at 107 to 127 (FIVKLLQFLVPLIILGVAFGV) threads the bilayer.

The protein belongs to the cytochrome b5 family. As to expression, specifically expressed in developing seeds.

It is found in the endoplasmic reticulum membrane. The protein resides in the microsome membrane. In terms of biological role, cytochrome b5 is a membrane bound hemoprotein which function as an electron carrier for several membrane bound oxygenases. May play a key role in the modification by desaturation of fatty acids in the endoplasmic reticulum, which in the developing seed is utilized for membrane synthesis and in the developmentally regulated production of large amounts of storage lipids. The sequence is that of Cytochrome b5, seed isoform from Nicotiana tabacum (Common tobacco).